Here is a 652-residue protein sequence, read N- to C-terminus: 1,4-alpha-glucan branching enzyme GlgB (652 aa).

Aspartate 322 serves as the catalytic Nucleophile. Glutamate 373 functions as the Proton donor in the catalytic mechanism.

This sequence belongs to the glycosyl hydrolase 13 family. GlgB subfamily. Monomer.

It catalyses the reaction Transfers a segment of a (1-&gt;4)-alpha-D-glucan chain to a primary hydroxy group in a similar glucan chain.. It participates in glycan biosynthesis; glycogen biosynthesis. Its function is as follows. Catalyzes the formation of the alpha-1,6-glucosidic linkages in glycogen by scission of a 1,4-alpha-linked oligosaccharide from growing alpha-1,4-glucan chains and the subsequent attachment of the oligosaccharide to the alpha-1,6 position. This chain is 1,4-alpha-glucan branching enzyme GlgB, found in Deinococcus geothermalis (strain DSM 11300 / CIP 105573 / AG-3a).